A 147-amino-acid chain; its full sequence is Testis-expressed protein 29 (147 aa).

The Extracellular portion of the chain corresponds to 1 to 57 (MRYAPEFKKSPSHLLKKFAVCDIPLYDICDYNVSRDRCKELGCCFYKGICYEKAVPS). A helical transmembrane segment spans residues 58–78 (YVQVFSALIVIIAGAFVITII). Topologically, residues 79 to 147 (YRVIQESRRE…IVTEEEETED (69 aa)) are cytoplasmic. Residues 86–147 (RREKEVPTEA…IVTEEEETED (62 aa)) are disordered. Over residues 99–108 (AKSSVQVETQ) the composition is skewed to polar residues. A compositionally biased stretch (low complexity) spans 109–120 (PPSSAGAGSKAP). Positions 125–135 (PQSKESGREDA) are enriched in basic and acidic residues.

Its subcellular location is the membrane. The sequence is that of Testis-expressed protein 29 (TEX29) from Bos taurus (Bovine).